A 280-amino-acid chain; its full sequence is Probable holocytochrome-c-type synthase (280 aa).

The disordered stretch occupies residues 1 to 95; the sequence is MGSSQSTPKV…FALPTKREKS (95 aa). 2 HRM repeats span residues 35 to 40 and 56 to 61; these read QCPLTP and ACPVGA.

The protein belongs to the cytochrome c-type heme lyase family.

Its subcellular location is the mitochondrion inner membrane. It catalyses the reaction holo-[cytochrome c] = apo-[cytochrome c] + heme b. Probable lyase that catalyzes the covalent linking of the heme group to the cytochrome C apoprotein to produce the mature functional cytochrome. The protein is Probable holocytochrome-c-type synthase (cchl-1) of Caenorhabditis elegans.